A 433-amino-acid polypeptide reads, in one-letter code: uncharacterized protein (433 aa).

The Radical SAM core domain occupies 104–349 (ERGRNIIQVR…ELEYKKKGIE (246 aa)). Residues C118, C122, and C125 each coordinate [4Fe-4S] cluster. S-adenosyl-L-methionine contacts are provided by residues 171–172 (GE) and 236–238 (MLS). In terms of domain architecture, TRAM spans 370–433 (PFKVGEVTKV…KDNIIVAELV (64 aa)).

The protein belongs to the radical SAM superfamily. The cofactor is [4Fe-4S] cluster.

This is an uncharacterized protein from Methanocaldococcus jannaschii (strain ATCC 43067 / DSM 2661 / JAL-1 / JCM 10045 / NBRC 100440) (Methanococcus jannaschii).